The following is a 250-amino-acid chain: tRNA (guanine-N(1)-)-methyltransferase (250 aa).

S-adenosyl-L-methionine contacts are provided by residues glycine 112 and 132-137 (IGDFVL).

This sequence belongs to the RNA methyltransferase TrmD family. In terms of assembly, homodimer.

The protein localises to the cytoplasm. It carries out the reaction guanosine(37) in tRNA + S-adenosyl-L-methionine = N(1)-methylguanosine(37) in tRNA + S-adenosyl-L-homocysteine + H(+). Specifically methylates guanosine-37 in various tRNAs. This is tRNA (guanine-N(1)-)-methyltransferase from Marinomonas sp. (strain MWYL1).